Consider the following 117-residue polypeptide: Nitrogen regulatory protein GlnK1 (117 aa).

Residues Thr32, 40–42 (GAQ), and 92–95 (GSGK) each bind ADP. Residues Thr32, 40–42 (GAQ), and 92–95 (GSGK) contribute to the ATP site.

This sequence belongs to the P(II) protein family. As to quaternary structure, homotrimer. Interacts and forms stable complexes with the glutamine synthetase GlnA1.

It localises to the cytoplasm. Inhibitory effects on GlnA1 are abolished in the presence of the effector 2-oxoglutarate. Its function is as follows. Involved in the regulation of nitrogen metabolism. Regulates the activity of its targets by protein-protein interaction in response to the nitrogen status of the cell. Allows finetuning control of the glutamine synthetase GlnA1 under changing nitrogen availabilities via direct protein interaction. The chain is Nitrogen regulatory protein GlnK1 from Methanosarcina mazei (strain ATCC BAA-159 / DSM 3647 / Goe1 / Go1 / JCM 11833 / OCM 88) (Methanosarcina frisia).